A 365-amino-acid polypeptide reads, in one-letter code: Galactoside alpha-(1,2)-fucosyltransferase 1 (365 aa).

The Cytoplasmic portion of the chain corresponds to 1-8; sequence MWPLSHRH. A helical; Signal-anchor for type II membrane protein membrane pass occupies residues 9 to 25; the sequence is LCLAFLLVCVLSAISFF. Residues 26–365 are Lumenal-facing; it reads LHLYQDSIRH…LSPLWTLAEP (340 aa). N-linked (GlcNAc...) asparagine glycans are attached at residues N65, N301, and N327.

This sequence belongs to the glycosyltransferase 11 family.

The protein localises to the golgi apparatus. Its subcellular location is the golgi stack membrane. It catalyses the reaction a beta-D-galactosyl-(1-&gt;4)-N-acetyl-beta-D-glucosaminyl derivative + GDP-beta-L-fucose = an alpha-L-Fuc-(1-&gt;2)-beta-D-Gal-(1-&gt;4)-beta-D-GlcNAc derivative + GDP + H(+). The catalysed reaction is a ganglioside GA1 + GDP-beta-L-fucose = a ganglioside Fuc-GA1 + GDP + H(+). It carries out the reaction a beta-D-Gal-(1-&gt;3)-beta-D-GlcNAc-(1-&gt;3)-beta-D-Gal-(1-&gt;4)-beta-D-Glc-(1&lt;-&gt;1')-Cer(d18:1(4E)) + GDP-beta-L-fucose = alpha-L-fucosyl-(1-&gt;2)- beta-D-galactosyl-(1-&gt;3)-N-acetyl-beta-D-glucosaminyl-(1-&gt;3)-beta-D-galactosyl-(1-&gt;4)-beta-D-glucosyl-(1&lt;-&gt;1')-N-acylsphing-4-enine + GDP + H(+). The enzyme catalyses a neolactoside nLc4Cer(d18:1(4E)) + GDP-beta-L-fucose = a neolactoside IV(2)-alpha-Fuc-nLc4Cer(d18:1(4E)) + GDP + H(+). It catalyses the reaction a ganglioside GM1 + GDP-beta-L-fucose = a ganglioside Fuc-GM1 + GDP + H(+). The catalysed reaction is beta-D-galactosyl-(1-&gt;3)-N-acetyl-D-galactosamine + GDP-beta-L-fucose = alpha-L-fucosyl-(1-&gt;2)-beta-D-galactosyl-(1-&gt;3)-N-acetyl-D-galactosamine + GDP + H(+). The protein operates within protein modification; protein glycosylation. In terms of biological role, catalyzes the transfer of L-fucose, from a guanosine diphosphate-beta-L-fucose, to the terminal galactose residue of glycoconjugates through an alpha(1,2) linkage leading to H antigen synthesis that is an intermediate substrate in the synthesis of ABO blood group antigens. H antigen is essential for maturation of the glomerular layer of the main olfactory bulb, in cell migration and early cell-cell contacts during tumor associated angiogenesis. Preferentially fucosylates soluble lactose and to a lesser extent fucosylates glycolipids gangliosides GA1 and GM1a. The chain is Galactoside alpha-(1,2)-fucosyltransferase 1 from Leontopithecus chrysomelas (Golden-headed lion tamarin).